A 714-amino-acid polypeptide reads, in one-letter code: Probable serine/threonine-protein kinase At1g09600 (714 aa).

Residues 1–64 (MGCNCTKGTR…NVGFEERSND (64 aa)) form a disordered region. Residue glycine 2 is the site of N-myristoyl glycine attachment. Over residues 16–27 (VDNSNSIVSNVN) the composition is skewed to low complexity. The span at 31–46 (RRSKPKKTPKKKKKSK) shows a compositional bias: basic residues. One can recognise a Protein kinase domain in the interval 163–447 (FEKLEKIGQG…TASALESEFF (285 aa)). ATP contacts are provided by residues 169–177 (IGQGTYSSV) and lysine 192. Aspartate 287 acts as the Proton acceptor in catalysis. A compositionally biased stretch (basic and acidic residues) spans 471–498 (KAQEEEAKRKKDTSSKQNDSKQVSRESK). 2 disordered regions span residues 471–579 (KAQE…RKEL) and 693–714 (VDKK…ANGR). 2 stretches are compositionally biased toward polar residues: residues 506-528 (NAES…NSDK) and 556-573 (GVSS…GSSR).

Belongs to the protein kinase superfamily. Ser/Thr protein kinase family.

The sequence is that of Probable serine/threonine-protein kinase At1g09600 from Arabidopsis thaliana (Mouse-ear cress).